The chain runs to 341 residues: Methionine import ATP-binding protein MetN 3 (341 aa).

Positions 2-241 constitute an ABC transporter domain; the sequence is ILLENVKKIY…PQQDITKRFV (240 aa). 38–45 is a binding site for ATP; the sequence is GYSGAGKS.

The protein belongs to the ABC transporter superfamily. Methionine importer (TC 3.A.1.24) family. In terms of assembly, the complex is composed of two ATP-binding proteins (MetN), two transmembrane proteins (MetI) and a solute-binding protein (MetQ).

The protein resides in the cell membrane. The catalysed reaction is L-methionine(out) + ATP + H2O = L-methionine(in) + ADP + phosphate + H(+). It catalyses the reaction D-methionine(out) + ATP + H2O = D-methionine(in) + ADP + phosphate + H(+). Functionally, part of the ABC transporter complex MetNIQ involved in methionine import. Responsible for energy coupling to the transport system. This is Methionine import ATP-binding protein MetN 3 from Bacillus anthracis.